The chain runs to 104 residues: UPF0473 protein LGAS_0424 (104 aa).

This sequence belongs to the UPF0473 family.

The sequence is that of UPF0473 protein LGAS_0424 from Lactobacillus gasseri (strain ATCC 33323 / DSM 20243 / BCRC 14619 / CIP 102991 / JCM 1131 / KCTC 3163 / NCIMB 11718 / NCTC 13722 / AM63).